Consider the following 541-residue polypeptide: Transmembrane protein 151 homolog (541 aa).

3 helical membrane-spanning segments follow: residues 27–47, 73–93, and 254–274; these read GYGK…YATF, YNFV…MECW, and PWFL…SWPL. Positions 503–541 are disordered; the sequence is ASISHSSSKDLKSLTLKSSSSNNNNNNSNNNNNDDPEHP. Residues 515 to 535 are compositionally biased toward low complexity; that stretch reads SLTLKSSSSNNNNNNSNNNNN.

This sequence belongs to the TMEM151 family.

The protein localises to the membrane. This is Transmembrane protein 151 homolog from Caenorhabditis elegans.